The chain runs to 428 residues: Glutamate-1-semialdehyde 2,1-aminomutase (428 aa).

The residue at position 265 (K265) is an N6-(pyridoxal phosphate)lysine.

The protein belongs to the class-III pyridoxal-phosphate-dependent aminotransferase family. HemL subfamily. As to quaternary structure, homodimer. Requires pyridoxal 5'-phosphate as cofactor.

It is found in the cytoplasm. The catalysed reaction is (S)-4-amino-5-oxopentanoate = 5-aminolevulinate. Its pathway is porphyrin-containing compound metabolism; protoporphyrin-IX biosynthesis; 5-aminolevulinate from L-glutamyl-tRNA(Glu): step 2/2. The sequence is that of Glutamate-1-semialdehyde 2,1-aminomutase from Methylobacillus flagellatus (strain ATCC 51484 / DSM 6875 / VKM B-1610 / KT).